Reading from the N-terminus, the 139-residue chain is Protein FAM237B (139 aa).

The first 24 residues, 1–24 (MCFATRRWFYLHLGCMMLINLVNA), serve as a signal peptide directing secretion. Met-112 is modified (methionine amide). A propeptide spans 113–139 (GRRQVMPPKYNFPQKITGGNLNVYLRE) (removed in the mature form).

The active form requires C-terminal amidation and disulfide bond formation.

Its subcellular location is the secreted. Its function is as follows. May be capable of activating GPR83 via the GNAQ signaling pathway. This is Protein FAM237B from Homo sapiens (Human).